Reading from the N-terminus, the 473-residue chain is Aspartyl/glutamyl-tRNA(Asn/Gln) amidotransferase subunit B (473 aa).

The protein belongs to the GatB/GatE family. GatB subfamily. As to quaternary structure, heterotrimer of A, B and C subunits.

The catalysed reaction is L-glutamyl-tRNA(Gln) + L-glutamine + ATP + H2O = L-glutaminyl-tRNA(Gln) + L-glutamate + ADP + phosphate + H(+). It catalyses the reaction L-aspartyl-tRNA(Asn) + L-glutamine + ATP + H2O = L-asparaginyl-tRNA(Asn) + L-glutamate + ADP + phosphate + 2 H(+). Functionally, allows the formation of correctly charged Asn-tRNA(Asn) or Gln-tRNA(Gln) through the transamidation of misacylated Asp-tRNA(Asn) or Glu-tRNA(Gln) in organisms which lack either or both of asparaginyl-tRNA or glutaminyl-tRNA synthetases. The reaction takes place in the presence of glutamine and ATP through an activated phospho-Asp-tRNA(Asn) or phospho-Glu-tRNA(Gln). This Methanococcoides burtonii (strain DSM 6242 / NBRC 107633 / OCM 468 / ACE-M) protein is Aspartyl/glutamyl-tRNA(Asn/Gln) amidotransferase subunit B.